A 1172-amino-acid polypeptide reads, in one-letter code: Lysylphosphatidylglycerol biosynthesis bifunctional protein LysX (1172 aa).

The interval 1-34 (MGLHLTVPGLRRDGRGVQSNSHDTSSKTTADISR) is disordered. Residues 1-663 (MGLHLTVPGL…LLHHDGSAPD (663 aa)) form a phosphatidylglycerol lysyltransferase region. Over residues 17-31 (VQSNSHDTSSKTTAD) the composition is skewed to polar residues. 7 helical membrane-spanning segments follow: residues 80–100 (VPAAAGWTVGVIATLSLLASV), 122–142 (FPDTNFAWSFVLALLAAALTA), 146–166 (IAWLVLLANMVLAAVVNAAEI), 177–197 (FGENLGFAVHVVAIVVLVLGY), 214–234 (AVWLAGAVVGIVASWGLVELF), 272–292 (AIFGLFGAFALIGAAIVLFLS), and 612–632 (VIPRVGVASVIAEGFLVLPFS). Positions 664 to 1172 (VSGLRQVGLT…TLPFPLAKPH (509 aa)) are lysine--tRNA ligase. A DNA-binding region (OB) is located at residues 726-804 (VSVSGRIMRI…SLIVSGWRLI (79 aa)). Positions 1084 and 1091 each coordinate Mg(2+).

In the N-terminal section; belongs to the LPG synthetase family. The protein in the C-terminal section; belongs to the class-II aminoacyl-tRNA synthetase family. Mg(2+) serves as cofactor.

The protein localises to the cell membrane. It catalyses the reaction tRNA(Lys) + L-lysine + ATP = L-lysyl-tRNA(Lys) + AMP + diphosphate. The catalysed reaction is L-lysyl-tRNA(Lys) + a 1,2-diacyl-sn-glycero-3-phospho-(1'-sn-glycerol) = a 1,2-diacyl-sn-glycero-3-phospho-1'-(3'-O-L-lysyl)-sn-glycerol + tRNA(Lys). In terms of biological role, catalyzes the production of L-lysyl-tRNA(Lys)transfer and the transfer of a lysyl group from L-lysyl-tRNA(Lys) to membrane-bound phosphatidylglycerol (PG), which produces lysylphosphatidylglycerol (LPG), one of the components of the bacterial membrane with a positive net charge. LPG synthesis contributes to the resistance to cationic antimicrobial peptides (CAMPs) and likely protects M.tuberculosis against the CAMPs produced by competiting microorganisms (bacteriocins). In fact, the modification of anionic phosphatidylglycerol with positively charged L-lysine results in repulsion of the peptides. The sequence is that of Lysylphosphatidylglycerol biosynthesis bifunctional protein LysX (lysX) from Mycobacterium bovis (strain ATCC BAA-935 / AF2122/97).